The primary structure comprises 89 residues: Small ribosomal subunit protein uS15 (89 aa).

It belongs to the universal ribosomal protein uS15 family. As to quaternary structure, part of the 30S ribosomal subunit. Forms a bridge to the 50S subunit in the 70S ribosome, contacting the 23S rRNA.

In terms of biological role, one of the primary rRNA binding proteins, it binds directly to 16S rRNA where it helps nucleate assembly of the platform of the 30S subunit by binding and bridging several RNA helices of the 16S rRNA. Forms an intersubunit bridge (bridge B4) with the 23S rRNA of the 50S subunit in the ribosome. The sequence is that of Small ribosomal subunit protein uS15 from Prochlorococcus marinus (strain MIT 9215).